The chain runs to 290 residues: Xyloglucan endotransglycosylase/hydrolase protein 8 (290 aa).

The N-terminal stretch at 1-25 (MAKHLALSVAAAVAVSWLAASSAAA) is a signal peptide. One can recognise a GH16 domain in the interval 26–218 (AGFYEKFDVV…WSGAPFVVSY (193 aa)). Catalysis depends on Glu106, which acts as the Nucleophile. The Proton donor role is filled by Glu110. Glu110 contributes to the xyloglucan binding site. The N-linked (GlcNAc...) asparagine glycan is linked to Asn114. Xyloglucan-binding positions include 123–125 (NTN), 133–135 (KKE), and 197–198 (YW). Cystine bridges form between Cys226–Cys240 and Cys273–Cys287. A xyloglucan-binding site is contributed by Arg278.

Belongs to the glycosyl hydrolase 16 family. XTH group 2 subfamily. Contains at least one intrachain disulfide bond essential for its enzymatic activity. In terms of tissue distribution, transcript strongly detected in leaf sheaths. Weakly or not expressed in leaf blades, roots and calli. Accumulation of transcript detected in shoot apex meristem, vascular tissues, young leaves, vascular bundles of leaf sheaths, and peripheral cylinder of the vascular bundles and fibers in the nodal region.

The protein localises to the secreted. It is found in the cell wall. It localises to the extracellular space. The protein resides in the apoplast. The catalysed reaction is breaks a beta-(1-&gt;4) bond in the backbone of a xyloglucan and transfers the xyloglucanyl segment on to O-4 of the non-reducing terminal glucose residue of an acceptor, which can be a xyloglucan or an oligosaccharide of xyloglucan.. Functionally, catalyzes xyloglucan endohydrolysis (XEH) and/or endotransglycosylation (XET). Cleaves and religates xyloglucan polymers, an essential constituent of the primary cell wall, and thereby participates in cell wall construction of growing tissues. May promote elongation of three internodes (II, III and IV) and may be involved in cell elongation processes. The protein is Xyloglucan endotransglycosylase/hydrolase protein 8 (XTH8) of Oryza sativa subsp. japonica (Rice).